The primary structure comprises 407 residues: Glycolate oxidase iron-sulfur subunit (407 aa).

4Fe-4S ferredoxin-type domains lie at 14–47 (RALEADSILRACVHCGFCTATCPTYQLLGDELDG) and 66–95 (LKTQEHLDRCLTCRNCETTCPSGVRYHNLL). Residues Cys25, Cys28, Cys31, Cys35, Cys75, Cys78, Cys81, and Cys85 each coordinate [4Fe-4S] cluster.

As to quaternary structure, the glycolate oxidase likely consists of three subunits, GlcD, GlcE and GlcF. [4Fe-4S] cluster serves as cofactor.

It is found in the cell inner membrane. It carries out the reaction glycolate + A = glyoxylate + AH2. The enzyme catalyses (R)-lactate + A = pyruvate + AH2. With respect to regulation, in vitro the glycolate oxidase activity is inhibited by the sulfhydryl inhibitors CuSO4 and PCMB, by KCN, but not by the metal complexing agent EDTA. Its function is as follows. Component of a complex that catalyzes the oxidation of glycolate to glyoxylate. Is required for E.coli to grow on glycolate as a sole source of carbon. Is also able to oxidize D-lactate ((R)-lactate) with a similar rate. Does not link directly to O(2), and 2,6-dichloroindophenol (DCIP) and phenazine methosulfate (PMS) can act as artificial electron acceptors in vitro, but the physiological molecule that functions as a primary electron acceptor during glycolate oxidation is unknown. This is Glycolate oxidase iron-sulfur subunit from Escherichia coli (strain K12).